Reading from the N-terminus, the 221-residue chain is Putative 5'(3')-deoxyribonucleotidase R824 (221 aa).

Positions 16 and 18 each coordinate Mg(2+). Asp-18 (nucleophile) is an active-site residue. Residues Asp-18, Ser-103, and Lys-138 each contribute to the phosphate site. Residue Asp-149 coordinates Mg(2+).

The protein belongs to the 5'(3')-deoxyribonucleotidase family. Requires Mg(2+) as cofactor.

Dephosphorylates the 5' and 2'(3')-phosphates of deoxyribonucleotides. In Acanthamoeba polyphaga mimivirus (APMV), this protein is Putative 5'(3')-deoxyribonucleotidase R824.